The chain runs to 47 residues: uncharacterized protein (47 aa).

Positions 1 to 18 (MKKWLLIIAGALIISACA) are cleaved as a signal peptide. The tract at residues 28 to 47 (EGSHSGVKFDKDSRQWGLNQ) is disordered.

This is an uncharacterized protein from Haemophilus influenzae (strain ATCC 51907 / DSM 11121 / KW20 / Rd).